Consider the following 298-residue polypeptide: MPDVRRAAAPRARSADPIAEEAAELLGSGAVPAMNAAVSPSVAAGREMMDRAMRIVPARSELRVTNEAGFVLHAHPYRETSLVLDVFTRDHGRVAMVAKGAKRPHSALRAVLQHFHPIALSWTGRGEVKTLTKAEYVGGMLPLSGDALLSGFYLNELLLRFCPREDAHPTLFRHYMATLTRLSHGEPASFVLRSFERVLLQETGFAVAFDQCLRSGERVQPGLDYVYQPERGVRRTHASDPSSWPVVSGQTLLDMAQDDYSRAQTVSQSRALMRFLLHYYLQGAPLKTRQILIDLQYL.

It belongs to the RecO family.

Its function is as follows. Involved in DNA repair and RecF pathway recombination. In Cupriavidus metallidurans (strain ATCC 43123 / DSM 2839 / NBRC 102507 / CH34) (Ralstonia metallidurans), this protein is DNA repair protein RecO.